We begin with the raw amino-acid sequence, 341 residues long: Beta-ketoacyl-[acyl-carrier-protein] synthase III 1 (341 aa).

Active-site residues include cysteine 113 and histidine 249. Residues glutamine 250–arginine 254 form an ACP-binding region. Residue asparagine 279 is part of the active site.

This sequence belongs to the thiolase-like superfamily. FabH family. In terms of assembly, homodimer.

It is found in the cytoplasm. It catalyses the reaction malonyl-[ACP] + acetyl-CoA + H(+) = 3-oxobutanoyl-[ACP] + CO2 + CoA. Its pathway is lipid metabolism; fatty acid biosynthesis. Its function is as follows. Catalyzes the condensation reaction of fatty acid synthesis by the addition to an acyl acceptor of two carbons from malonyl-ACP. Catalyzes the first condensation reaction which initiates fatty acid synthesis and may therefore play a role in governing the total rate of fatty acid production. Possesses both acetoacetyl-ACP synthase and acetyl transacylase activities. Its substrate specificity determines the biosynthesis of branched-chain and/or straight-chain of fatty acids. The sequence is that of Beta-ketoacyl-[acyl-carrier-protein] synthase III 1 from Deinococcus radiodurans (strain ATCC 13939 / DSM 20539 / JCM 16871 / CCUG 27074 / LMG 4051 / NBRC 15346 / NCIMB 9279 / VKM B-1422 / R1).